The primary structure comprises 381 residues: Alkanesulfonate monooxygenase (381 aa).

The protein belongs to the SsuD family. As to quaternary structure, homotetramer.

The catalysed reaction is an alkanesulfonate + FMNH2 + O2 = an aldehyde + FMN + sulfite + H2O + 2 H(+). Functionally, catalyzes the desulfonation of aliphatic sulfonates. The polypeptide is Alkanesulfonate monooxygenase (Escherichia coli (strain SMS-3-5 / SECEC)).